A 72-amino-acid chain; its full sequence is UPF0150 protein ssl0738 (72 aa).

It belongs to the UPF0150 family.

The protein is UPF0150 protein ssl0738 of Synechocystis sp. (strain ATCC 27184 / PCC 6803 / Kazusa).